Here is a 615-residue protein sequence, read N- to C-terminus: Filament-like plant protein 3 (615 aa).

The span at 1 to 18 (MDRRSWLWRRKSSEKSPG) shows a compositional bias: basic and acidic residues. A disordered region spans residues 1-55 (MDRRSWLWRRKSSEKSPGETESTGSVSSHSERFSDDQRSQSPELNSKPVTREEEA). The segment covering 19–28 (ETESTGSVSS) has biased composition (polar residues). Basic and acidic residues predominate over residues 29–38 (HSERFSDDQR). The span at 39–48 (SQSPELNSKP) shows a compositional bias: polar residues. 2 coiled-coil regions span residues 87–121 (AEEAVSGWEKAENEAAALKQQLDASTSKVSALEDR) and 148–211 (EEAI…KSEE). 2 disordered regions span residues 258–289 (DNSSDLKSSIDNQSDYSGRVSFSDNEMQSPSE) and 319–343 (PHSEPGRKHSESNKELEKSNAHVNQ). Over residues 262–288 (DLKSSIDNQSDYSGRVSFSDNEMQSPS) the composition is skewed to polar residues. Residues 322 to 343 (EPGRKHSESNKELEKSNAHVNQ) show a composition bias toward basic and acidic residues. Residues 327–563 (HSESNKELEK…KQELEHHQET (237 aa)) adopt a coiled-coil conformation.

It belongs to the FPP family. Interacts with WPP/MAF proteins. Binds to COG2; this interaction promotes the association between cortical microtubules and EXO70A1. In terms of tissue distribution, accumulates in preferentially xylem cells.

It localises to the vesicle. Its function is as follows. Ensures, when in complex with COG2 and FPP2/VETH2, the correct secondary cell wall (SCW) deposition pattern by recruiting exocyst components to cortical microtubules in xylem cells during secondary cell wall deposition by recruiting EXO70A1. This is Filament-like plant protein 3 from Arabidopsis thaliana (Mouse-ear cress).